The chain runs to 193 residues: ATP-dependent Clp protease proteolytic subunit 2 (193 aa).

Ser98 (nucleophile) is an active-site residue. Residue His123 is part of the active site.

Belongs to the peptidase S14 family. In terms of assembly, fourteen ClpP subunits assemble into 2 heptameric rings which stack back to back to give a disk-like structure with a central cavity, resembling the structure of eukaryotic proteasomes.

The protein resides in the cytoplasm. The enzyme catalyses Hydrolysis of proteins to small peptides in the presence of ATP and magnesium. alpha-casein is the usual test substrate. In the absence of ATP, only oligopeptides shorter than five residues are hydrolyzed (such as succinyl-Leu-Tyr-|-NHMec, and Leu-Tyr-Leu-|-Tyr-Trp, in which cleavage of the -Tyr-|-Leu- and -Tyr-|-Trp bonds also occurs).. In terms of biological role, cleaves peptides in various proteins in a process that requires ATP hydrolysis. Has a chymotrypsin-like activity. Plays a major role in the degradation of misfolded proteins. The protein is ATP-dependent Clp protease proteolytic subunit 2 of Bacillus anthracis.